Consider the following 194-residue polypeptide: Putative 3-methyladenine DNA glycosylase (194 aa).

Belongs to the DNA glycosylase MPG family.

This is Putative 3-methyladenine DNA glycosylase from Myxococcus xanthus (strain DK1622).